We begin with the raw amino-acid sequence, 274 residues long: DNA-directed RNA polymerase subunit Rpo3 (274 aa).

[3Fe-4S] cluster-binding residues include Cys-202, Cys-205, and Cys-208.

This sequence belongs to the archaeal Rpo3/eukaryotic RPB3 RNA polymerase subunit family. In terms of assembly, part of the RNA polymerase complex. It depends on [3Fe-4S] cluster as a cofactor.

It localises to the cytoplasm. The enzyme catalyses RNA(n) + a ribonucleoside 5'-triphosphate = RNA(n+1) + diphosphate. Functionally, DNA-dependent RNA polymerase (RNAP) catalyzes the transcription of DNA into RNA using the four ribonucleoside triphosphates as substrates. The sequence is that of DNA-directed RNA polymerase subunit Rpo3 from Methanobrevibacter smithii (strain ATCC 35061 / DSM 861 / OCM 144 / PS).